Reading from the N-terminus, the 290-residue chain is 6-carboxyhexanoate--CoA ligase (290 aa).

The protein belongs to the BioW family. Homodimer. Requires Mg(2+) as cofactor.

The catalysed reaction is heptanedioate + ATP + CoA = 6-carboxyhexanoyl-CoA + AMP + diphosphate. Its pathway is metabolic intermediate metabolism; pimeloyl-CoA biosynthesis; pimeloyl-CoA from pimelate: step 1/1. Its function is as follows. Catalyzes the transformation of pimelate into pimeloyl-CoA with concomitant hydrolysis of ATP to AMP. This Bacillus amyloliquefaciens (Bacillus velezensis) protein is 6-carboxyhexanoate--CoA ligase.